Consider the following 309-residue polypeptide: MSAKIIRIATRQSPLALWQANHVREMLVKQWPNLSIELLPMITSGDRFLKDKLLSAGGKGLFVKELEEALLDKRADLAVHSTKDMPAQLPDGLLLTAICKRDNPFDALISPQFKSLAALPKNAIIGTSSLRRQSQLLAYNPNLQIKTLRGNIHTRLSKLESGEYQAIILAAAGLERMGLAHHITQLIPDDIMLPTCAQGALCIECRTDDLEIQELVHGLNDPISALCVHTERRVNAKLGGNCHIPFAVYCTITEEKLLLLRAKVLNMDGSQMIDDEQQGKIAEAEVIADRCTESLMTKGAMSLLSTIPS.

The residue at position 242 (C242) is an S-(dipyrrolylmethanemethyl)cysteine.

Belongs to the HMBS family. Monomer. Dipyrromethane is required as a cofactor.

It carries out the reaction 4 porphobilinogen + H2O = hydroxymethylbilane + 4 NH4(+). The protein operates within porphyrin-containing compound metabolism; protoporphyrin-IX biosynthesis; coproporphyrinogen-III from 5-aminolevulinate: step 2/4. Functionally, tetrapolymerization of the monopyrrole PBG into the hydroxymethylbilane pre-uroporphyrinogen in several discrete steps. This chain is Porphobilinogen deaminase, found in Legionella pneumophila subsp. pneumophila (strain Philadelphia 1 / ATCC 33152 / DSM 7513).